The sequence spans 277 residues: 4-hydroxy-tetrahydrodipicolinate reductase (277 aa).

9 to 14 provides a ligand contact to NAD(+); the sequence is GATGRM. Lysine 37 is a binding site for NADP(+). Residue 75 to 77 coordinates NAD(+); that stretch reads GTS. Histidine 132 functions as the Proton donor/acceptor in the catalytic mechanism. Catalysis depends on lysine 136, which acts as the Proton donor. 142–143 lines the (S)-2,3,4,5-tetrahydrodipicolinate pocket; that stretch reads GT. Disordered stretches follow at residues 154–173 and 247–277; these read ARGA…ARGQ and ERAA…VTSA. Over residues 250–265 the composition is skewed to low complexity; that stretch reads AQAAAGDAPSGPVDDG.

Belongs to the DapB family.

The protein localises to the cytoplasm. It catalyses the reaction (S)-2,3,4,5-tetrahydrodipicolinate + NAD(+) + H2O = (2S,4S)-4-hydroxy-2,3,4,5-tetrahydrodipicolinate + NADH + H(+). It carries out the reaction (S)-2,3,4,5-tetrahydrodipicolinate + NADP(+) + H2O = (2S,4S)-4-hydroxy-2,3,4,5-tetrahydrodipicolinate + NADPH + H(+). The protein operates within amino-acid biosynthesis; L-lysine biosynthesis via DAP pathway; (S)-tetrahydrodipicolinate from L-aspartate: step 4/4. Functionally, catalyzes the conversion of 4-hydroxy-tetrahydrodipicolinate (HTPA) to tetrahydrodipicolinate. This is 4-hydroxy-tetrahydrodipicolinate reductase from Clavibacter michiganensis subsp. michiganensis (strain NCPPB 382).